The chain runs to 118 residues: uncharacterized protein (118 aa).

This is an uncharacterized protein from Sulfolobus islandicus filamentous virus (isolate Iceland/Hveragerdi) (SIFV).